A 448-amino-acid polypeptide reads, in one-letter code: Carbamoyl phosphate synthase arginine-specific small chain (448 aa).

Residues 1-27 (MFKNIARLASMARSAPRTTASFQTRFM) constitute a mitochondrion transit peptide. Positions 224 to 415 (HIAVIDCGVK…LGQVHQYRAA (192 aa)) constitute a Glutamine amidotransferase type-1 domain. Catalysis depends on Cys304, which acts as the Nucleophile. Residues His388 and Glu390 contribute to the active site.

Belongs to the CarA family. As to quaternary structure, heterodimer composed of 2 chains; the small (or glutamine) chain promotes the hydrolysis of glutamine to ammonia, which is used by the large (or ammonia) chain to synthesize carbamoyl phosphate.

It localises to the mitochondrion matrix. The enzyme catalyses hydrogencarbonate + L-glutamine + 2 ATP + H2O = carbamoyl phosphate + L-glutamate + 2 ADP + phosphate + 2 H(+). It carries out the reaction L-glutamine + H2O = L-glutamate + NH4(+). It functions in the pathway amino-acid biosynthesis; L-arginine biosynthesis; carbamoyl phosphate from bicarbonate: step 1/1. Functionally, small subunit of the arginine-specific carbamoyl phosphate synthase (CPSase). CPSase catalyzes the formation of carbamoyl phosphate from the ammonia moiety of glutamine, carbonate, and phosphate donated by ATP, the first step of the arginine biosynthetic pathway. The small subunit (glutamine amidotransferase) binds and cleaves glutamine to supply the large subunit with the substrate ammonia. The polypeptide is Carbamoyl phosphate synthase arginine-specific small chain (CPA1) (Yarrowia lipolytica (strain CLIB 122 / E 150) (Yeast)).